We begin with the raw amino-acid sequence, 197 residues long: Transposon Tn552 resolvase (197 aa).

The Resolvase/invertase-type recombinase catalytic domain maps to 1 to 136; it reads MKIGYARVST…AGRIAARARG (136 aa). Ser9 functions as the O-(5'-phospho-DNA)-serine intermediate in the catalytic mechanism. The segment at residues 163-182 is a DNA-binding region (H-T-H motif); it reads IKTIAEQWQVSRTTIYRYLN.

Belongs to the site-specific recombinase resolvase family.

Resolvase catalyzes the resolution (a site-specific recombination) of the cointegrated replicon to yield the final transposition products. The chain is Transposon Tn552 resolvase (tnpR) from Staphylococcus aureus.